We begin with the raw amino-acid sequence, 375 residues long: Erythronate-4-phosphate dehydrogenase (375 aa).

Substrate is bound by residues S45 and T66. D146 and T175 together coordinate NAD(+). R208 is an active-site residue. Residue D232 coordinates NAD(+). Residue E237 is part of the active site. H254 serves as the catalytic Proton donor. G257 contacts NAD(+). Residue Y258 coordinates substrate.

The protein belongs to the D-isomer specific 2-hydroxyacid dehydrogenase family. PdxB subfamily. Homodimer.

It is found in the cytoplasm. It catalyses the reaction 4-phospho-D-erythronate + NAD(+) = (R)-3-hydroxy-2-oxo-4-phosphooxybutanoate + NADH + H(+). It functions in the pathway cofactor biosynthesis; pyridoxine 5'-phosphate biosynthesis; pyridoxine 5'-phosphate from D-erythrose 4-phosphate: step 2/5. Functionally, catalyzes the oxidation of erythronate-4-phosphate to 3-hydroxy-2-oxo-4-phosphonooxybutanoate. This Yersinia enterocolitica serotype O:8 / biotype 1B (strain NCTC 13174 / 8081) protein is Erythronate-4-phosphate dehydrogenase.